Here is a 371-residue protein sequence, read N- to C-terminus: Isopentenyl-diphosphate delta-isomerase (371 aa).

Residue R9 to K10 participates in substrate binding. FMN contacts are provided by residues T66, G67 to T69, S100, and N128. S100 to R102 is a binding site for substrate. Q167 contacts substrate. E168 serves as a coordination point for Mg(2+). FMN is bound by residues K199, S224, T229, G278–R280, and A299–L300.

The protein belongs to the IPP isomerase type 2 family. As to quaternary structure, homooctamer. Dimer of tetramers. It depends on FMN as a cofactor. NADPH serves as cofactor. Mg(2+) is required as a cofactor.

The protein resides in the cytoplasm. The catalysed reaction is isopentenyl diphosphate = dimethylallyl diphosphate. In terms of biological role, involved in the biosynthesis of isoprenoids. Catalyzes the 1,3-allylic rearrangement of the homoallylic substrate isopentenyl (IPP) to its allylic isomer, dimethylallyl diphosphate (DMAPP). This is Isopentenyl-diphosphate delta-isomerase from Pyrococcus horikoshii (strain ATCC 700860 / DSM 12428 / JCM 9974 / NBRC 100139 / OT-3).